A 512-amino-acid chain; its full sequence is Acid-sensing ion channel 2 (512 aa).

At 1-42 (MDLKESPSEGSLQPSSIQIFANTSTLHGIRHIFVYGPLTIRR) the chain is on the cytoplasmic side. Phosphoserine occurs at positions 8 and 11. The helical transmembrane segment at 43-64 (VLWAVAFVGSLGLLLVESSERV) threads the bilayer. The Extracellular segment spans residues 65 to 424 (SYYFSYQHVT…ETIEQKKAYE (360 aa)). Disulfide bonds link Cys92–Cys193, Cys289–Cys364, Cys307–Cys360, Cys311–Cys358, Cys320–Cys342, and Cys322–Cys334. Asn365 and Asn392 each carry an N-linked (GlcNAc...) asparagine glycan. The chain crosses the membrane as a helical span at residues 425 to 439 (VAALLGDIGGQMGLF). At 440–512 (IGASILTILE…TLGTLEEIAC (73 aa)) the chain is on the cytoplasmic side. The short motif at 441 to 443 (GAS) is the GAS motif; ion selectivity filter element.

This sequence belongs to the amiloride-sensitive sodium channel (TC 1.A.6) family. ASIC2 subfamily. As to quaternary structure, can form homotrimers. Heterotrimer; forms functional heterotrimers producing channel with different properties. Forms heterotrimers with ASIC1; while ASIC1 determines current amplitude, ASIC2 influences the properties of the current. Forms heterotrimers with ASIC3; resulting in channels with distinct properties. Interacts with STOM; STOM regulates the gating of ASIC2-containing channels. Interacts with PICK1; promotes ASIC3 phosphorylation by PKC and activation of ASIC2/ASIC3 heterotrimers. As to expression, expressed in brain, cerebellum, trigeminal sensory ganglia and also detected in testis.

The protein localises to the cell membrane. It carries out the reaction Na(+)(in) = Na(+)(out). It catalyses the reaction K(+)(in) = K(+)(out). The catalysed reaction is Li(+)(in) = Li(+)(out). Inhibited by the diuretic drug amiloride. Inhibited by gadolinium ions, the heterotrimer with ASIC3 being more sensitive. Heterotrimer composed of ASIC1 and ASIC2 are inhibited by the snake venom mambalgin-1. Its function is as follows. Forms pH-gated trimeric sodium channels that act as postsynaptic excitatory sensors in the nervous system. Upon extracellular acidification, these channels generate rapid, transient inward currents that fully desensitize. Highly selective for sodium, they are permeable to other cations. By forming heterotrimeric channels with ASIC1, could contribute to synaptic plasticity, learning, and memory. Additionally, as acid sensors at nerve terminals, plays a role in mechanosensation and phototransduction. The sequence is that of Acid-sensing ion channel 2 from Homo sapiens (Human).